The primary structure comprises 90 residues: Putative regulatory protein NT01CX_2250 (90 aa).

It belongs to the RemA family.

The sequence is that of Putative regulatory protein NT01CX_2250 from Clostridium novyi (strain NT).